A 127-amino-acid polypeptide reads, in one-letter code: Holo-[acyl-carrier-protein] synthase (127 aa).

Mg(2+)-binding residues include Asp8 and Glu56.

It belongs to the P-Pant transferase superfamily. AcpS family. The cofactor is Mg(2+).

It is found in the cytoplasm. The enzyme catalyses apo-[ACP] + CoA = holo-[ACP] + adenosine 3',5'-bisphosphate + H(+). In terms of biological role, transfers the 4'-phosphopantetheine moiety from coenzyme A to a Ser of acyl-carrier-protein. This chain is Holo-[acyl-carrier-protein] synthase, found in Deinococcus deserti (strain DSM 17065 / CIP 109153 / LMG 22923 / VCD115).